Here is a 290-residue protein sequence, read N- to C-terminus: D-tagatose 3-epimerase (290 aa).

Residue cysteine 66 coordinates substrate. The active-site Proton donor/acceptor is glutamate 152. Residue glutamate 152 coordinates Mn(2+). Substrate contacts are provided by residues glutamate 158 and 185 to 188 (DTFH). Aspartate 185 and histidine 211 together coordinate Mn(2+). Arginine 217 contacts substrate. The Proton donor/acceptor role is filled by glutamate 246. Glutamate 246 lines the Mn(2+) pocket.

Belongs to the hyi family. In terms of assembly, homodimer. It depends on Mn(2+) as a cofactor.

It catalyses the reaction keto-D-tagatose = keto-D-sorbose. It carries out the reaction D-allulose = keto-D-fructose. The catalysed reaction is D-ribulose = D-xylulose. Strongly inhibited (about 90% of the enzyme activity) by Ag(+), Hg(2+) and p-chloromercuribenzoic acid. Cu(2+) and Zn(2+) inhibit about 60% of the enzyme activity. Functionally, catalyzes the epimerization of various ketoses at the C(3) position. It is able to interconvert D-tagatose and D-ribulose to D-sorbose and D-xylulose, respectively. The enzyme is also able to accept other ketopentoses such as D-psicose with lower efficiency. The sequence is that of D-tagatose 3-epimerase from Pseudomonas cichorii.